Consider the following 318-residue polypeptide: uncharacterized protein (318 aa).

The span at 1-22 (MKASQERSEARRTAHSVKEKKY) shows a compositional bias: basic and acidic residues. 2 disordered regions span residues 1 to 29 (MKASQERSEARRTAHSVKEKKYMVMASPR) and 293 to 318 (DDGDDGDGDDDGDDDGDDDGGDDDDE).

This is an uncharacterized protein from Ictalurid herpesvirus 1 (strain Auburn) (IcHV-1).